The following is a 468-amino-acid chain: N-acyl-phosphatidylethanolamine-hydrolyzing phospholipase D, mitochondrial (468 aa).

A mitochondrion-targeting transit peptide spans 1 to 39; the sequence is MNFVTCHVQMRLLLQRRLVRLRESELFRPQTSLSTFKRH. The helical transmembrane segment at 54–76 threads the bilayer; it reads YARILLLSVLVPYTGYAFYVSLA. Zn(2+) contacts are provided by histidine 265, histidine 267, aspartate 269, histidine 270, histidine 332, and histidine 425.

The protein belongs to the NAPE-PLD family. Requires Zn(2+) as cofactor.

The protein localises to the mitochondrion membrane. It catalyses the reaction an N-acyl-1,2-diacyl-sn-glycero-3-phosphoethanolamine + H2O = an N-acylethanolamine + a 1,2-diacyl-sn-glycero-3-phosphate + H(+). Its function is as follows. Hydrolyzes N-acyl-phosphatidylethanolamines (NAPEs) to produce N-acylethanolamines (NAEs). This chain is N-acyl-phosphatidylethanolamine-hydrolyzing phospholipase D, mitochondrial (FMP30), found in Saccharomyces cerevisiae (strain ATCC 204508 / S288c) (Baker's yeast).